Consider the following 227-residue polypeptide: Charged multivesicular body protein 4b (227 aa).

Disordered regions lie at residues 1–26 (MSGILGKLFGAGAGGKGAGKGPSPQE) and 186–227 (SGPE…AGNM). Gly residues predominate over residues 9–20 (FGAGAGGKGAGK). Residues 25-185 (QEAIQRLRDT…EELDKNLLEI (161 aa)) adopt a coiled-coil conformation.

Belongs to the SNF7 family. Probable core component of the endosomal sorting required for transport complex III (ESCRT-III). ESCRT-III components are thought to multimerize to form a flat lattice on the perimeter membrane of the endosome.

Its subcellular location is the cytoplasm. It localises to the cytosol. It is found in the late endosome membrane. The protein resides in the midbody. Its function is as follows. Probable core component of the endosomal sorting required for transport complex III (ESCRT-III) which is involved in multivesicular bodies (MVBs) formation and sorting of endosomal cargo proteins into MVBs. MVBs contain intraluminal vesicles (ILVs) that are generated by invagination and scission from the limiting membrane of the endosome and mostly are delivered to lysosomes enabling degradation of membrane proteins, such as stimulated growth factor receptors, lysosomal enzymes and lipids. This chain is Charged multivesicular body protein 4b (CHMP4B), found in Gallus gallus (Chicken).